The following is a 130-amino-acid chain: MSGKGGKAGSAAKASQSRSAKAGLTFPVGRVHRLLRKGNYAQRIGSGAPVYLTAVLEYLAAEILELAGNAARDNKKTRIIPRHLQLAIRNDDELNKLLGNVTIAQGGVLPNIHQNLLPKKSSKAKASQEL.

Lys-4 and Lys-7 each carry N6-acetyllysine. N5-methylglutamine is present on Gln-105. Position 127 is a phosphoserine (Ser-127). The [ST]-Q motif motif lies at 127 to 128 (SQ).

This sequence belongs to the histone H2A family. In terms of assembly, the nucleosome is a histone octamer containing two molecules each of H2A, H2B, H3 and H4 assembled in one H3-H4 heterotetramer and two H2A-H2B heterodimers. The octamer wraps approximately 147 bp of DNA. Phosphorylated to form H2AS128ph (gamma-H2A) in response to DNA double-strand breaks (DSBs) generated by exogenous genotoxic agents and by stalled replication forks. Phosphorylation is dependent on the DNA damage checkpoint kinases MEC1/ATR and TEL1/ATM, spreads on either side of a detected DSB site and may mark the surrounding chromatin for recruitment of proteins required for DNA damage signaling and repair. Gamma-H2A is removed from the DNA prior to the strand invasion-primer extension step of the repair process and subsequently dephosphorylated by PPH3, a component of the histone H2A phosphatase complex (HTP-C). Dephosphorylation is necessary for efficient recovery from the DNA damage checkpoint. In terms of processing, acetylated by ESA1 to form H2AK4ac and H2AK7ac.

Its subcellular location is the nucleus. It localises to the chromosome. Its function is as follows. Core component of nucleosome which plays a central role in DNA double strand break (DSB) repair. Nucleosomes wrap and compact DNA into chromatin, limiting DNA accessibility to the cellular machineries which require DNA as a template. Histones thereby play a central role in transcription regulation, DNA repair, DNA replication and chromosomal stability. DNA accessibility is regulated via a complex set of post-translational modifications of histones, also called histone code, and nucleosome remodeling. This is Histone H2A (HTA1) from Kluyveromyces lactis (strain ATCC 8585 / CBS 2359 / DSM 70799 / NBRC 1267 / NRRL Y-1140 / WM37) (Yeast).